A 354-amino-acid polypeptide reads, in one-letter code: NADH-quinone oxidoreductase subunit H 2 (354 aa).

The next 8 membrane-spanning stretches (helical) occupy residues 4 to 24, 81 to 101, 130 to 150, 170 to 190, 201 to 221, 269 to 289, 296 to 316, and 333 to 353; these read IALF…VLLT, ILAP…VPFG, IGLL…ALAG, VSYE…SGSF, GGFW…FIYL, VACI…PGFL, LVPV…YIWV, and WKFL…FVAL.

Belongs to the complex I subunit 1 family. In terms of assembly, NDH-1 is composed of 14 different subunits. Subunits NuoA, H, J, K, L, M, N constitute the membrane sector of the complex.

The protein resides in the cell inner membrane. It carries out the reaction a quinone + NADH + 5 H(+)(in) = a quinol + NAD(+) + 4 H(+)(out). In terms of biological role, NDH-1 shuttles electrons from NADH, via FMN and iron-sulfur (Fe-S) centers, to quinones in the respiratory chain. The immediate electron acceptor for the enzyme in this species is believed to be ubiquinone. Couples the redox reaction to proton translocation (for every two electrons transferred, four hydrogen ions are translocated across the cytoplasmic membrane), and thus conserves the redox energy in a proton gradient. This subunit may bind ubiquinone. This chain is NADH-quinone oxidoreductase subunit H 2, found in Koribacter versatilis (strain Ellin345).